A 266-amino-acid chain; its full sequence is Undecaprenyl-diphosphatase (266 aa).

The next 8 helical transmembrane spans lie at 4–24, 39–59, 88–108, 114–134, 147–167, 186–206, 214–234, and 246–266; these read ILRV…PISS, LPIV…IIYY, LNLI…GIFI, LFTF…LFLI, IFFS…PGIS, SLEI…FLKY, IIFN…FGLF, and SKLY…YFLV.

The protein belongs to the UppP family.

It localises to the cell inner membrane. It carries out the reaction di-trans,octa-cis-undecaprenyl diphosphate + H2O = di-trans,octa-cis-undecaprenyl phosphate + phosphate + H(+). Its function is as follows. Catalyzes the dephosphorylation of undecaprenyl diphosphate (UPP). Confers resistance to bacitracin. This chain is Undecaprenyl-diphosphatase, found in Borrelia recurrentis (strain A1).